A 131-amino-acid chain; its full sequence is Large ribosomal subunit protein bL17 (131 aa).

This sequence belongs to the bacterial ribosomal protein bL17 family. As to quaternary structure, part of the 50S ribosomal subunit. Contacts protein L32.

The protein is Large ribosomal subunit protein bL17 of Chromobacterium violaceum (strain ATCC 12472 / DSM 30191 / JCM 1249 / CCUG 213 / NBRC 12614 / NCIMB 9131 / NCTC 9757 / MK).